The primary structure comprises 113 residues: T cell receptor alpha variable 8-1 (113 aa).

The signal sequence occupies residues 1-20 (MLLLLIPVLGMIFALRDARA). Residues 21-113 (QSVSQHNHHV…DTAEYFCAVN (93 aa)) enclose the Ig-like domain. An intrachain disulfide couples cysteine 42 to cysteine 110. N-linked (GlcNAc...) asparagine glycosylation occurs at asparagine 43.

In terms of assembly, alpha-beta TR is a heterodimer composed of an alpha and beta chain; disulfide-linked. The alpha-beta TR is associated with the transmembrane signaling CD3 coreceptor proteins to form the TR-CD3 (TcR or TCR). The assembly of alpha-beta TR heterodimers with CD3 occurs in the endoplasmic reticulum where a single alpha-beta TR heterodimer associates with one CD3D-CD3E heterodimer, one CD3G-CD3E heterodimer and one CD247 homodimer forming a stable octameric structure. CD3D-CD3E and CD3G-CD3E heterodimers preferentially associate with TR alpha and TR beta chains, respectively. The association of the CD247 homodimer is the last step of TcR assembly in the endoplasmic reticulum and is required for transport to the cell surface.

It localises to the cell membrane. In terms of biological role, v region of the variable domain of T cell receptor (TR) alpha chain that participates in the antigen recognition. Alpha-beta T cell receptors are antigen specific receptors which are essential to the immune response and are present on the cell surface of T lymphocytes. Recognize peptide-major histocompatibility (MH) (pMH) complexes that are displayed by antigen presenting cells (APC), a prerequisite for efficient T cell adaptive immunity against pathogens. Binding of alpha-beta TR to pMH complex initiates TR-CD3 clustering on the cell surface and intracellular activation of LCK that phosphorylates the ITAM motifs of CD3G, CD3D, CD3E and CD247 enabling the recruitment of ZAP70. In turn ZAP70 phosphorylates LAT, which recruits numerous signaling molecules to form the LAT signalosome. The LAT signalosome propagates signal branching to three major signaling pathways, the calcium, the mitogen-activated protein kinase (MAPK) kinase and the nuclear factor NF-kappa-B (NF-kB) pathways, leading to the mobilization of transcription factors that are critical for gene expression and essential for T cell growth and differentiation. The T cell repertoire is generated in the thymus, by V-(D)-J rearrangement. This repertoire is then shaped by intrathymic selection events to generate a peripheral T cell pool of self-MH restricted, non-autoaggressive T cells. Post-thymic interaction of alpha-beta TR with the pMH complexes shapes TR structural and functional avidity. This is T cell receptor alpha variable 8-1 from Homo sapiens (Human).